The chain runs to 261 residues: Glucosamine-6-phosphate deaminase (261 aa).

The Proton acceptor; for enolization step role is filled by D67. N136 functions as the For ring-opening step in the catalytic mechanism. H138 (proton acceptor; for ring-opening step) is an active-site residue. The For ring-opening step role is filled by E143.

The protein belongs to the glucosamine/galactosamine-6-phosphate isomerase family. NagB subfamily.

The enzyme catalyses alpha-D-glucosamine 6-phosphate + H2O = beta-D-fructose 6-phosphate + NH4(+). Its pathway is amino-sugar metabolism; N-acetylneuraminate degradation; D-fructose 6-phosphate from N-acetylneuraminate: step 5/5. Catalyzes the reversible isomerization-deamination of glucosamine 6-phosphate (GlcN6P) to form fructose 6-phosphate (Fru6P) and ammonium ion. This is Glucosamine-6-phosphate deaminase from Cutibacterium acnes (strain DSM 16379 / KPA171202) (Propionibacterium acnes).